We begin with the raw amino-acid sequence, 461 residues long: Argininosuccinate lyase (461 aa).

The protein belongs to the lyase 1 family. Argininosuccinate lyase subfamily.

It is found in the cytoplasm. The catalysed reaction is 2-(N(omega)-L-arginino)succinate = fumarate + L-arginine. Its pathway is amino-acid biosynthesis; L-arginine biosynthesis; L-arginine from L-ornithine and carbamoyl phosphate: step 3/3. This is Argininosuccinate lyase from Limosilactobacillus reuteri subsp. reuteri (strain JCM 1112) (Lactobacillus reuteri).